Reading from the N-terminus, the 181-residue chain is Shikimate kinase 2 (181 aa).

12–17 (GCGKTT) is an ATP binding site. Residues Thr16 and Asp32 each contribute to the Mg(2+) site. The substrate site is built by Asp34, Arg58, and Gly79. The tract at residues 112–126 (EAEPEAELRPTLTGK) is LID domain. An ATP-binding site is contributed by Arg120. Position 139 (Arg139) interacts with substrate.

It belongs to the shikimate kinase family. AroL subfamily. Monomer. Mg(2+) is required as a cofactor.

It localises to the cytoplasm. It catalyses the reaction shikimate + ATP = 3-phosphoshikimate + ADP + H(+). Its pathway is metabolic intermediate biosynthesis; chorismate biosynthesis; chorismate from D-erythrose 4-phosphate and phosphoenolpyruvate: step 5/7. Functionally, catalyzes the specific phosphorylation of the 3-hydroxyl group of shikimic acid using ATP as a cosubstrate. The protein is Shikimate kinase 2 of Salmonella schwarzengrund (strain CVM19633).